Consider the following 193-residue polypeptide: Erythropoietin (193 aa).

Residues 1–27 (MGVHECPAWLWLLLSLLSLPLGLPVLG) form the signal peptide. Disulfide bonds link Cys34–Cys188 and Cys56–Cys60. Asn51 carries an N-linked (GlcNAc...) asparagine glycan. N-linked (GlcNAc...) asparagine glycosylation is found at Asn65 and Asn110. An O-linked (GalNAc...) serine glycan is attached at Ser153.

Belongs to the EPO/TPO family. As to expression, produced by kidney or liver of adult mammals and by liver of fetal or neonatal mammals.

It localises to the secreted. In terms of biological role, hormone involved in the regulation of erythrocyte proliferation and differentiation and the maintenance of a physiological level of circulating erythrocyte mass. Binds to EPOR leading to EPOR dimerization and JAK2 activation thereby activating specific downstream effectors, including STAT1 and STAT3. This is Erythropoietin (EPO) from Homo sapiens (Human).